A 119-amino-acid polypeptide reads, in one-letter code: Large ribosomal subunit protein uL18 (119 aa).

Belongs to the universal ribosomal protein uL18 family. Part of the 50S ribosomal subunit; part of the 5S rRNA/L5/L18/L25 subcomplex. Contacts the 5S and 23S rRNAs.

This is one of the proteins that bind and probably mediate the attachment of the 5S RNA into the large ribosomal subunit, where it forms part of the central protuberance. In Malacoplasma penetrans (strain HF-2) (Mycoplasma penetrans), this protein is Large ribosomal subunit protein uL18.